Consider the following 309-residue polypeptide: Isoflavone reductase homolog IRL (309 aa).

NADP(+) contacts are provided by residues 12-18 (GGTGYLG), Arg37, and Lys46. Lys134 acts as the Proton acceptor in catalysis. Residue Arg138 participates in NADP(+) binding.

This sequence belongs to the NmrA-type oxidoreductase family. Isoflavone reductase subfamily. In terms of assembly, monomer.

It localises to the cytoplasm. It participates in alkaloid biosynthesis. Reductase that may be involved in a late step of alkaloid biosynthesis. The chain is Isoflavone reductase homolog IRL from Zea mays (Maize).